Here is a 268-residue protein sequence, read N- to C-terminus: MAISHNTLAFTFGMLGNVISFLVFLAPISTFYRIYKKKSTEGFQSLPYLVALFSSMLWLYYALLKKDAFLLITINSFGCVVETIYIILYIIYAPRDARNLTFKLLSAMNVGSFALILIVTNYAVHGPLRVQVLGWVCVSLSVSVFAAPLSIVAQVVRTKSVEFMPFNLSFTLTLSATMWFGYGFFLKDICIXLPNVLGXVLGLLQMLLYAIYRNGGEKAMKKEKKAPIEPPKSIVIETQLEKIEQEKKNKDDDNEEKDKSEEPIGCGV.

The Extracellular portion of the chain corresponds to 1–7 (MAISHNT). A helical membrane pass occupies residues 8–28 (LAFTFGMLGNVISFLVFLAPI). One can recognise a MtN3/slv 1 domain in the interval 10–96 (FTFGMLGNVI…ILYIIYAPRD (87 aa)). The Cytoplasmic segment spans residues 29-42 (STFYRIYKKKSTEG). A helical membrane pass occupies residues 43 to 63 (FQSLPYLVALFSSMLWLYYAL). Topologically, residues 64–70 (LKKDAFL) are extracellular. Residues 71 to 91 (LITINSFGCVVETIYIILYII) traverse the membrane as a helical segment. The Cytoplasmic portion of the chain corresponds to 92-103 (YAPRDARNLTFK). Residues 104–124 (LLSAMNVGSFALILIVTNYAV) traverse the membrane as a helical segment. At 125–131 (HGPLRVQ) the chain is on the extracellular side. The MtN3/slv 2 domain occupies 131-214 (QVLGWVCVSL…QMLLYAIYRN (84 aa)). A helical transmembrane segment spans residues 132–152 (VLGWVCVSLSVSVFAAPLSIV). Topologically, residues 153–165 (AQVVRTKSVEFMP) are cytoplasmic. Residues 166–186 (FNLSFTLTLSATMWFGYGFFL) form a helical membrane-spanning segment. The Extracellular segment spans residues 187–190 (KDIC). The helical transmembrane segment at 191–211 (IXLPNVLGXVLGLLQMLLYAI) threads the bilayer. Topologically, residues 212 to 268 (YRNGGEKAMKKEKKAPIEPPKSIVIETQLEKIEQEKKNKDDDNEEKDKSEEPIGCGV) are cytoplasmic. The stretch at 234-262 (IVIETQLEKIEQEKKNKDDDNEEKDKSEE) forms a coiled coil. Residues 243-262 (IEQEKKNKDDDNEEKDKSEE) show a composition bias toward basic and acidic residues. Positions 243–268 (IEQEKKNKDDDNEEKDKSEEPIGCGV) are disordered.

This sequence belongs to the SWEET sugar transporter family. In terms of assembly, forms homooligomers and/or heterooligomers.

The protein resides in the cell membrane. Its function is as follows. Mediates both low-affinity uptake and efflux of sugar across the plasma membrane. The protein is Bidirectional sugar transporter N3 (N3) of Medicago truncatula (Barrel medic).